A 606-amino-acid polypeptide reads, in one-letter code: Vitamin B12 transporter BtuB (606 aa).

An N-terminal signal peptide occupies residues 1-21; that stretch reads MKKTLLAVALAPLCLPSQVFA. A TonB box motif is present at residues 28-35; that stretch reads DVMVVTAN. Positions 40–152 constitute a TBDR plug domain; it reads PIKNVIAPIS…IGGVLNIITA (113 aa). In terms of domain architecture, TBDR beta-barrel spans 157 to 606; it reads ESVAEVTAGG…SYYATATYKF (450 aa). The TonB C-terminal box motif lies at 589 to 606; it reads ETYNVQERSYYATATYKF.

The protein belongs to the TonB-dependent receptor family. BtuB (TC 1.B.14.3.1) subfamily.

It localises to the cell outer membrane. Its function is as follows. Involved in the active translocation of vitamin B12 (cyanocobalamin) across the outer membrane to the periplasmic space. It derives its energy for transport by interacting with the trans-periplasmic membrane protein TonB. This is Vitamin B12 transporter BtuB from Photobacterium profundum (strain SS9).